Reading from the N-terminus, the 601-residue chain is Leucine-rich repeat-containing protein 40 (601 aa).

21 LRR repeats span residues 33–56 (ARKS…VWRL), 79–101 (QTDL…DVKL), 102–124 (LPAL…SIGD), 125–148 (LEQL…VWRL), 150–170 (NLRC…DLGQ), 171–193 (LVNL…SLAN), 194–217 (LQNL…ISQM), 219–239 (NLRM…VLAQ), 240–264 (MESL…CCKT), 266–285 (KELH…HLKH), 286–308 (LNAL…EITL), 309–334 (LQGL…TLPK), 336–355 (KSLS…LLTK), 397–420 (IKTL…VFDA), 423–446 (GNPV…IVDL), 447–469 (KDSL…DFCH), 470–492 (LKQL…ELEG), 493–516 (LIKL…LYRI), 518–539 (SLET…QMKT), 540–563 (LSRL…LGNC), and 565–586 (SLRA…ILIK).

This is Leucine-rich repeat-containing protein 40 (lrrc40) from Danio rerio (Zebrafish).